We begin with the raw amino-acid sequence, 141 residues long: Large ribosomal subunit protein uL16 (141 aa).

Residues 1 to 17 are compositionally biased toward basic residues; that stretch reads MLQPKRTKYRKVQKGKM. The segment at 1–29 is disordered; that stretch reads MLQPKRTKYRKVQKGKMKGNSQRGHELSN.

Belongs to the universal ribosomal protein uL16 family. As to quaternary structure, part of the 50S ribosomal subunit.

In terms of biological role, binds 23S rRNA and is also seen to make contacts with the A and possibly P site tRNAs. This chain is Large ribosomal subunit protein uL16, found in Flavobacterium psychrophilum (strain ATCC 49511 / DSM 21280 / CIP 103535 / JIP02/86).